A 196-amino-acid chain; its full sequence is Adenylyl-sulfate kinase (196 aa).

31–38 (GLSGAGKS) serves as a coordination point for ATP. Ser105 functions as the Phosphoserine intermediate in the catalytic mechanism.

The protein belongs to the APS kinase family.

It catalyses the reaction adenosine 5'-phosphosulfate + ATP = 3'-phosphoadenylyl sulfate + ADP + H(+). Its pathway is sulfur metabolism; hydrogen sulfide biosynthesis; sulfite from sulfate: step 2/3. Functionally, catalyzes the synthesis of activated sulfate. This chain is Adenylyl-sulfate kinase (cysC), found in Pseudomonas aeruginosa (strain ATCC 15692 / DSM 22644 / CIP 104116 / JCM 14847 / LMG 12228 / 1C / PRS 101 / PAO1).